Here is a 968-residue protein sequence, read N- to C-terminus: Isoleucine--tRNA ligase (968 aa).

Residues 68–78 (PYANGALHMGH) carry the 'HIGH' region motif. An L-isoleucyl-5'-AMP-binding site is contributed by Glu584. Positions 625–629 (KMSKS) match the 'KMSKS' region motif. ATP is bound at residue Lys628. The Zn(2+) site is built by Cys938, Cys941, Cys958, and Cys961.

It belongs to the class-I aminoacyl-tRNA synthetase family. IleS type 1 subfamily. As to quaternary structure, monomer. Requires Zn(2+) as cofactor.

It localises to the cytoplasm. It catalyses the reaction tRNA(Ile) + L-isoleucine + ATP = L-isoleucyl-tRNA(Ile) + AMP + diphosphate. Catalyzes the attachment of isoleucine to tRNA(Ile). As IleRS can inadvertently accommodate and process structurally similar amino acids such as valine, to avoid such errors it has two additional distinct tRNA(Ile)-dependent editing activities. One activity is designated as 'pretransfer' editing and involves the hydrolysis of activated Val-AMP. The other activity is designated 'posttransfer' editing and involves deacylation of mischarged Val-tRNA(Ile). This is Isoleucine--tRNA ligase from Prochlorococcus marinus (strain MIT 9313).